A 475-amino-acid chain; its full sequence is Ribulose bisphosphate carboxylase large chain (475 aa).

Positions 1 to 2 (MS) are excised as a propeptide. Position 3 is an N-acetylproline (proline 3). The residue at position 14 (lysine 14) is an N6,N6,N6-trimethyllysine. Residues asparagine 123 and threonine 173 each contribute to the substrate site. Lysine 175 (proton acceptor) is an active-site residue. Lysine 177 provides a ligand contact to substrate. The Mg(2+) site is built by lysine 201, aspartate 203, and glutamate 204. Lysine 201 is modified (N6-carboxylysine). Histidine 294 serves as the catalytic Proton acceptor. 3 residues coordinate substrate: arginine 295, histidine 327, and serine 379.

This sequence belongs to the RuBisCO large chain family. Type I subfamily. In terms of assembly, heterohexadecamer of 8 large chains and 8 small chains; disulfide-linked. The disulfide link is formed within the large subunit homodimers. Mg(2+) is required as a cofactor. The disulfide bond which can form in the large chain dimeric partners within the hexadecamer appears to be associated with oxidative stress and protein turnover.

The protein localises to the plastid. It is found in the chloroplast. The enzyme catalyses 2 (2R)-3-phosphoglycerate + 2 H(+) = D-ribulose 1,5-bisphosphate + CO2 + H2O. The catalysed reaction is D-ribulose 1,5-bisphosphate + O2 = 2-phosphoglycolate + (2R)-3-phosphoglycerate + 2 H(+). In terms of biological role, ruBisCO catalyzes two reactions: the carboxylation of D-ribulose 1,5-bisphosphate, the primary event in carbon dioxide fixation, as well as the oxidative fragmentation of the pentose substrate in the photorespiration process. Both reactions occur simultaneously and in competition at the same active site. The chain is Ribulose bisphosphate carboxylase large chain from Chara vulgaris (Common stonewort).